A 1131-amino-acid polypeptide reads, in one-letter code: cGMP-specific 3',5'-cyclic phosphodiesterase (1131 aa).

Disordered regions lie at residues 1–26 and 42–150; these read MTDV…SAAT and GVAP…SQQD. The segment covering 42–63 has biased composition (low complexity); that stretch reads GVAPGAVPGPGSAAIPASSSSG. A compositionally biased stretch (polar residues) spans 75–86; that stretch reads SNNNRPAATNRS. Positions 110-136 are enriched in low complexity; sequence SSSTPSQSPSPSQSPSQASIQTQTSQQ. 2 consecutive GAF domains span residues 255 to 412 and 444 to 625; these read DIDV…GIGI and NLEC…GLGI. The 324-residue stretch at 655–978 folds into the PDEase domain; the sequence is SQDQTEKLTQ…RNWQDLAEKV (324 aa). The active-site Proton donor is His-731. Residues His-735, His-771, Asp-772, and Asp-882 each contribute to the a divalent metal cation site. Disordered stretches follow at residues 1019–1048 and 1078–1131; these read QQSQ…TGAL and SHVS…CALL. 2 stretches are compositionally biased toward basic and acidic residues: residues 1024–1035 and 1078–1088; these read GSEDSHTPEHQR and SHVSEDMDDKS. Positions 1097-1117 are enriched in low complexity; sequence ASGSMGRMSASSSTSSAGGQM. Over residues 1121-1131 the composition is skewed to basic residues; it reads SKKRSKLCALL. Position 1128 is a cysteine methyl ester (Cys-1128). Cys-1128 is lipidated: S-farnesyl cysteine. A propeptide spans 1129–1131 (removed in mature form); it reads ALL.

This sequence belongs to the cyclic nucleotide phosphodiesterase family. In terms of assembly, interacts with PrBP. A divalent metal cation serves as cofactor.

The protein localises to the cell membrane. The catalysed reaction is 3',5'-cyclic GMP + H2O = GMP + H(+). Functionally, has a role regulating cGMP transport in Malpighian tubule principal cells. The protein is cGMP-specific 3',5'-cyclic phosphodiesterase of Drosophila erecta (Fruit fly).